The sequence spans 543 residues: Chaperonin GroEL 2 (543 aa).

ATP contacts are provided by residues 29 to 32 (TLGP), 86 to 90 (DGTTT), Gly413, and Asp495. The tract at residues 524-543 (KPEPKENAPTGAGMGGDFDY) is disordered.

Belongs to the chaperonin (HSP60) family. In terms of assembly, forms a cylinder of 14 subunits composed of two heptameric rings stacked back-to-back. Interacts with the co-chaperonin GroES.

The protein resides in the cytoplasm. It catalyses the reaction ATP + H2O + a folded polypeptide = ADP + phosphate + an unfolded polypeptide.. Its function is as follows. Together with its co-chaperonin GroES, plays an essential role in assisting protein folding. The GroEL-GroES system forms a nano-cage that allows encapsulation of the non-native substrate proteins and provides a physical environment optimized to promote and accelerate protein folding. This is Chaperonin GroEL 2 from Acaryochloris marina (strain MBIC 11017).